A 257-amino-acid polypeptide reads, in one-letter code: Pantothenate synthetase (257 aa).

ATP is bound at residue 29–36 (MGNLHAGH). Histidine 36 serves as the catalytic Proton donor. Residue glutamine 60 participates in (R)-pantoate binding. Residue glutamine 60 coordinates beta-alanine. Residue 145–148 (GEKD) participates in ATP binding. Glutamine 151 contacts (R)-pantoate. ATP is bound by residues valine 174 and 182 to 185 (LSSR).

Belongs to the pantothenate synthetase family. Homodimer.

It localises to the cytoplasm. It catalyses the reaction (R)-pantoate + beta-alanine + ATP = (R)-pantothenate + AMP + diphosphate + H(+). Its pathway is cofactor biosynthesis; (R)-pantothenate biosynthesis; (R)-pantothenate from (R)-pantoate and beta-alanine: step 1/1. Its function is as follows. Catalyzes the condensation of pantoate with beta-alanine in an ATP-dependent reaction via a pantoyl-adenylate intermediate. The chain is Pantothenate synthetase from Coxiella burnetii (strain Dugway 5J108-111).